The sequence spans 322 residues: Cysteine protease yopT1 (322 aa).

The disordered stretch occupies residues 42 to 69; that stretch reads LSHSNRQKKLSATIKHNQSSRSMLDRKL. Catalysis depends on residues Cys139, His258, and Asp274.

The protein belongs to the peptidase C58 family. As to quaternary structure, interacts with human ARHA.

Its subcellular location is the secreted. Functionally, cysteine protease, which is translocated into infected cells and plays a central role in pathogenesis by cleaving the C-terminus end of the human small GTPase RhoA/ARHA, a regulator of cytoskeleton. Once cleaved, ARHA loses its lipid modification, and is released from the cell membrane, leading to the subsequent disruption of actin cytoskeleton of the host cell. The chain is Cysteine protease yopT1 (yopT1) from Yersinia enterocolitica serotype O:8 / biotype 1B (strain NCTC 13174 / 8081).